The following is a 276-amino-acid chain: Undecaprenyl-diphosphatase (276 aa).

The next 8 membrane-spanning stretches (helical) occupy residues 1–21 (MSWLQVVVLSVLQGLTEFLPV), 39–59 (AGASFTAVCQLGTEAAVLVYF), 84–104 (YWLGWWVIIGTIPISVIGLLF), 115–135 (LWLVATAMIVFSFVIAAAEYA), 159–179 (LALVPGVSRSGATISAGLFLG), 190–210 (FLLAIPAVFASGLFSLPDAFA), 222–242 (QLLVSTVIAFVVGYAAVAWFL), and 253–273 (FVGYRIILGSVVLILLSTGVV).

The protein belongs to the UppP family.

Its subcellular location is the cell membrane. It catalyses the reaction di-trans,octa-cis-undecaprenyl diphosphate + H2O = di-trans,octa-cis-undecaprenyl phosphate + phosphate + H(+). In terms of biological role, catalyzes the dephosphorylation of undecaprenyl diphosphate (UPP). Confers resistance to bacitracin. This Mycolicibacterium gilvum (strain PYR-GCK) (Mycobacterium gilvum (strain PYR-GCK)) protein is Undecaprenyl-diphosphatase.